Consider the following 154-residue polypeptide: SsrA-binding protein (154 aa).

The protein belongs to the SmpB family.

It localises to the cytoplasm. In terms of biological role, required for rescue of stalled ribosomes mediated by trans-translation. Binds to transfer-messenger RNA (tmRNA), required for stable association of tmRNA with ribosomes. tmRNA and SmpB together mimic tRNA shape, replacing the anticodon stem-loop with SmpB. tmRNA is encoded by the ssrA gene; the 2 termini fold to resemble tRNA(Ala) and it encodes a 'tag peptide', a short internal open reading frame. During trans-translation Ala-aminoacylated tmRNA acts like a tRNA, entering the A-site of stalled ribosomes, displacing the stalled mRNA. The ribosome then switches to translate the ORF on the tmRNA; the nascent peptide is terminated with the 'tag peptide' encoded by the tmRNA and targeted for degradation. The ribosome is freed to recommence translation, which seems to be the essential function of trans-translation. In Treponema denticola (strain ATCC 35405 / DSM 14222 / CIP 103919 / JCM 8153 / KCTC 15104), this protein is SsrA-binding protein.